Here is a 429-residue protein sequence, read N- to C-terminus: Bifunctional protein GlmU (429 aa).

Positions 1–223 are pyrophosphorylase; it reads MKISVLILAA…EQDFMGVNDK (223 aa). UDP-N-acetyl-alpha-D-glucosamine-binding positions include 8–11, Lys-22, Gln-74, and 81–82; these read LAAG and GT. Position 102 (Asp-102) interacts with Mg(2+). Residues Gly-135, Glu-149, Asn-164, and Asn-221 each contribute to the UDP-N-acetyl-alpha-D-glucosamine site. Position 221 (Asn-221) interacts with Mg(2+). The segment at 224–244 is linker; sequence IELCLAQDLMQEAIKKEWMKQ. Positions 245-429 are N-acetyltransferase; that stretch reads GVIFHMPATT…KDYFYTKFKK (185 aa). Arg-308 and Lys-325 together coordinate UDP-N-acetyl-alpha-D-glucosamine. The Proton acceptor role is filled by His-336. UDP-N-acetyl-alpha-D-glucosamine contacts are provided by Tyr-339 and Asn-350. Acetyl-CoA is bound by residues 359 to 360, Ser-378, Ala-396, and Arg-413; that span reads NY.

The protein in the N-terminal section; belongs to the N-acetylglucosamine-1-phosphate uridyltransferase family. It in the C-terminal section; belongs to the transferase hexapeptide repeat family. Homotrimer. The cofactor is Mg(2+).

Its subcellular location is the cytoplasm. The enzyme catalyses alpha-D-glucosamine 1-phosphate + acetyl-CoA = N-acetyl-alpha-D-glucosamine 1-phosphate + CoA + H(+). It carries out the reaction N-acetyl-alpha-D-glucosamine 1-phosphate + UTP + H(+) = UDP-N-acetyl-alpha-D-glucosamine + diphosphate. It participates in nucleotide-sugar biosynthesis; UDP-N-acetyl-alpha-D-glucosamine biosynthesis; N-acetyl-alpha-D-glucosamine 1-phosphate from alpha-D-glucosamine 6-phosphate (route II): step 2/2. Its pathway is nucleotide-sugar biosynthesis; UDP-N-acetyl-alpha-D-glucosamine biosynthesis; UDP-N-acetyl-alpha-D-glucosamine from N-acetyl-alpha-D-glucosamine 1-phosphate: step 1/1. It functions in the pathway bacterial outer membrane biogenesis; LPS lipid A biosynthesis. Catalyzes the last two sequential reactions in the de novo biosynthetic pathway for UDP-N-acetylglucosamine (UDP-GlcNAc). The C-terminal domain catalyzes the transfer of acetyl group from acetyl coenzyme A to glucosamine-1-phosphate (GlcN-1-P) to produce N-acetylglucosamine-1-phosphate (GlcNAc-1-P), which is converted into UDP-GlcNAc by the transfer of uridine 5-monophosphate (from uridine 5-triphosphate), a reaction catalyzed by the N-terminal domain. The sequence is that of Bifunctional protein GlmU from Campylobacter lari (strain RM2100 / D67 / ATCC BAA-1060).